A 265-amino-acid polypeptide reads, in one-letter code: Probable cyclic nucleotide phosphodiesterase SynWH7803_1390 (265 aa).

Fe cation-binding residues include Asp-9, His-11, Asp-49, Asn-86, His-157, His-196, and His-198. AMP is bound by residues His-11, Asp-49, and 86 to 87; that span reads NH. His-198 lines the AMP pocket.

This sequence belongs to the cyclic nucleotide phosphodiesterase class-III family. It depends on Fe(2+) as a cofactor.

The protein is Probable cyclic nucleotide phosphodiesterase SynWH7803_1390 of Synechococcus sp. (strain WH7803).